The following is a 276-amino-acid chain: MGIKLFKPTTPSRRNMSANTFEEITTDKPEKSLLVSLKRTGGRNSQGKITVRHRGGGAKRKYRIIDFKRDKDGIPAKVATIEYDPNRTAFIALVVYTDGEKRYIIAPQGLKVGDVIVSGPDADIKAGNCLPIKNIPVGTFVHNIELASGKGAQLVRSAGGSAQLMAKEGNYATIKLPSGETRYVRIECRATIGTVSNVKHEIMSIGKAGRKRKMGFRPTVRGSAMNPCDHPHGGGEGRTPIGMSSPVTPWGKPALGYKTRKTKKYSDRLIIKRKND.

The disordered stretch occupies residues 218–255; sequence PTVRGSAMNPCDHPHGGGEGRTPIGMSSPVTPWGKPAL.

The protein belongs to the universal ribosomal protein uL2 family. Part of the 50S ribosomal subunit. Forms a bridge to the 30S subunit in the 70S ribosome.

In terms of biological role, one of the primary rRNA binding proteins. Required for association of the 30S and 50S subunits to form the 70S ribosome, for tRNA binding and peptide bond formation. It has been suggested to have peptidyltransferase activity; this is somewhat controversial. Makes several contacts with the 16S rRNA in the 70S ribosome. The polypeptide is Large ribosomal subunit protein uL2 (Clostridium tetani (strain Massachusetts / E88)).